A 76-amino-acid chain; its full sequence is Esculentin-2MT2 (76 aa).

A signal peptide spans 1 to 22 (MFTLKKSMLLLFFLGTISLSLC). A propeptide spans 23–37 (EEERSADEDDGEKEV) (removed in mature form). An intrachain disulfide couples Cys70 to Cys76.

Belongs to the frog skin active peptide (FSAP) family. Esculentin subfamily. As to expression, expressed by the skin glands.

It is found in the secreted. Antimicrobial peptide. Active against a variety of Gram-negative and Gram-positive bacterial strains. Active against fungi. Shows strong hemolytic activity against human erythrocytes. The protein is Esculentin-2MT2 of Amolops mantzorum (Sichuan torrent frog).